The sequence spans 363 residues: Membrane-bound lytic murein transglycosylase C (363 aa).

A signal peptide spans 1 to 15 (MKKYIVFAIIPFLFA). C16 carries the N-palmitoyl cysteine lipid modification. The S-diacylglycerol cysteine moiety is linked to residue C16.

The protein belongs to the transglycosylase Slt family.

The protein resides in the cell outer membrane. The catalysed reaction is Exolytic cleavage of the (1-&gt;4)-beta-glycosidic linkage between N-acetylmuramic acid (MurNAc) and N-acetylglucosamine (GlcNAc) residues in peptidoglycan, from either the reducing or the non-reducing ends of the peptidoglycan chains, with concomitant formation of a 1,6-anhydrobond in the MurNAc residue.. Murein-degrading enzyme. May play a role in recycling of muropeptides during cell elongation and/or cell division. The chain is Membrane-bound lytic murein transglycosylase C from Histophilus somni (strain 129Pt) (Haemophilus somnus).